Reading from the N-terminus, the 369-residue chain is Tetraacyldisaccharide 4'-kinase (369 aa).

ATP is bound at residue 52 to 59 (TVGGTGKT).

This sequence belongs to the LpxK family.

It catalyses the reaction a lipid A disaccharide + ATP = a lipid IVA + ADP + H(+). Its pathway is glycolipid biosynthesis; lipid IV(A) biosynthesis; lipid IV(A) from (3R)-3-hydroxytetradecanoyl-[acyl-carrier-protein] and UDP-N-acetyl-alpha-D-glucosamine: step 6/6. Its function is as follows. Transfers the gamma-phosphate of ATP to the 4'-position of a tetraacyldisaccharide 1-phosphate intermediate (termed DS-1-P) to form tetraacyldisaccharide 1,4'-bis-phosphate (lipid IVA). The polypeptide is Tetraacyldisaccharide 4'-kinase (Parabacteroides distasonis (strain ATCC 8503 / DSM 20701 / CIP 104284 / JCM 5825 / NCTC 11152)).